Here is a 424-residue protein sequence, read N- to C-terminus: Lipoamide acyltransferase component of branched-chain alpha-keto acid dehydrogenase complex (424 aa).

The Lipoyl-binding domain maps to 3–78 (IEQMTMPQLG…QVGEMICKIE (76 aa)). N6-lipoyllysine is present on Lys-44. The disordered stretch occupies residues 82 to 115 (ANPAEQKQEQPAASEAAENPVAKSAGAADQPNKK). The 38-residue stretch at 116–153 (RYSPAVLRLAGEHGIDLDQVTGTGAGGRITRKDIQRLI) folds into the Peripheral subunit-binding (PSBD) domain. The tract at residues 154 to 193 (ETGGVQEQNPEELKTAAPAPKSASKPEPKEETSYPASAAG) is disordered. Active-site residues include His-395 and Asp-399.

It belongs to the 2-oxoacid dehydrogenase family. Forms a 24-polypeptide structural core with octahedral symmetry. (R)-lipoate serves as cofactor.

It carries out the reaction N(6)-[(R)-dihydrolipoyl]-L-lysyl-[protein] + 2-methylpropanoyl-CoA = N(6)-[(R)-S(8)-2-methylpropanoyldihydrolipoyl]-L-lysyl-[protein] + CoA. In terms of biological role, the branched-chain alpha-keto dehydrogenase complex catalyzes the overall conversion of alpha-keto acids to acyl-CoA and CO(2). It contains multiple copies of three enzymatic components: branched-chain alpha-keto acid decarboxylase (E1), lipoamide acyltransferase (E2) and lipoamide dehydrogenase (E3). This chain is Lipoamide acyltransferase component of branched-chain alpha-keto acid dehydrogenase complex (bfmBB), found in Bacillus subtilis (strain 168).